Consider the following 50-residue polypeptide: Temporin-SHa (50 aa).

Positions 1 to 10 (FLGTINLSLC) are cleaved as a signal peptide. A propeptide spanning residues 11 to 35 (EQERDADEEERRDEPNESNVEVEKR) is cleaved from the precursor. Phe-48 bears the Phenylalanine amide mark.

Belongs to the frog skin active peptide (FSAP) family. Temporin subfamily. In terms of tissue distribution, expressed by the skin glands.

The protein localises to the secreted. The protein resides in the target cell membrane. Functionally, amphipathic alpha-helical antimicrobial peptide with highly potent activity against Gram-positive bacteria, and potent activity Gram-negative bacteria and fungi (MIC=2-30 uM). Acts through membranolytic mechanism involving rapid membrane permeabilization and depolarization. Shows a direct extra-cellular antiviral activity probably through degradation of the viral envelope. Also shows a weak indirect antiviral activity by inhibiting virus replication. Also displays anti-trypanosoma and anti-leishmania (prosmastigotes and axenic amastigotes) activity through membranolytic mechanism. Also induces apoptosis in leishmania promastigotes at high peptide concentrations. Shows moderate hemolytic activity (LC(50)=25 uM). In contrast to many antibiotics, this peptide does not induce bacterial resistance. This chain is Temporin-SHa, found in Pelophylax saharicus (Sahara frog).